The chain runs to 397 residues: 2-aminoadipate transaminase (397 aa).

Gly-40 contacts substrate. Pyridoxal 5'-phosphate contacts are provided by residues Tyr-70, 100–101 (SQ), Asn-174, 202–205 (DDAY), 235–237 (SFS), and Arg-245. Asn-174 contributes to the substrate binding site. The residue at position 263 (Lys-263) is an N6-(pyridoxal phosphate)lysine. Residue Arg-368 coordinates substrate.

This sequence belongs to the class-I pyridoxal-phosphate-dependent aminotransferase family. Homodimer. Pyridoxal 5'-phosphate serves as cofactor.

It catalyses the reaction L-2-aminoadipate + 2-oxoglutarate = 2-oxoadipate + L-glutamate. It participates in amino-acid biosynthesis; L-lysine biosynthesis via AAA pathway; L-alpha-aminoadipate from 2-oxoglutarate: step 5/5. Functionally, catalyzes the transfer of an amino group between 2-oxoadipate (2-OA) and glutamate (Glu) to yield alpha-aminodipate (AAA). It can also transaminate glutamate, leucine, and aromatic amino acids. It also contributes in the biosynthesis of other amino acids such as leucine. This chain is 2-aminoadipate transaminase (lysN), found in Thermus thermophilus (strain ATCC BAA-163 / DSM 7039 / HB27).